The following is a 738-amino-acid chain: MAKIIWTRTDEAPLLATYSLKPVVEAFAATAGIEVETRDISLAGRILAQFPERLTEDQKVGNALAELGELAKTPEANIIKLPNISASVPQLKAAIKELQDQGYDIPELPDNATTDEEKDILARYNAVKGSAVNPVLREGNSDRRAPIAVKNFVKKFPHRMGEWSADSKTNVATMDANDFRHNEKSIILDAADEVQIKHIAADGTETILKDSLKLLEGEVLDGTVLSAKALDAFLLEQVARAKAEGILFSAHLKATMMKVSDPIIFGHVVRAYFADVFAQYGEQLLAAGLNGENGLAAILSGLESLDNGEEIKAAFEKGLEDGPDLAMVNSARGITNLHVPSDVIVDASMPAMIRTSGHMWNKDDQEQDTLAIIPDSSYAGVYQTVIEDCRKNGAFDPTTMGTVPNVGLMAQKAEEYGSHDKTFRIEADGVVQVVSSNGDVLIEHDVEANDIWRACQVKDAPIQDWVKLAVTRSRLSGMPAVFWLDPERAHDRNLASLVEKYLADHDTEGLDIQILSPVEATQLSIDRIRRGEDTISVTGNVLRDYNTDLFPILELGTSAKMLSVVPLMAGGGLFETGAGGSAPKHVQQVQEENHLRWDSLGEFLALAESFRHELNNNGNTKAGVLADALDKATEKLLNEEKSPSRKVGEIDNRGSHFWLTKFWADELAAQTEDADLAATFAPVAEALNTGAADIDAALLAVQGGATDLGGYYSPNEEKLTNIMRPVAQFNEIVDALKK.

NADP(+) is bound by residues Asn83 and Ser85. Positions 130, 133, 137, 143, and 253 each coordinate D-threo-isocitrate. Asn133 provides a ligand contact to NADP(+). Asp346 is a Mg(2+) binding site. 2 residues coordinate D-threo-isocitrate: Tyr416 and Arg543. Asp544 and Asp548 together coordinate Mg(2+). Residues Gly580, His585, Arg596, Asp598, and Arg645 each coordinate NADP(+).

It belongs to the monomeric-type IDH family. In terms of assembly, monomer. The cofactor is Mg(2+). Requires Mn(2+) as cofactor.

The protein localises to the cytoplasm. It catalyses the reaction D-threo-isocitrate + NADP(+) = 2-oxoglutarate + CO2 + NADPH. Weakly inhibited by oxaloacetate, 2-oxoglutarate and citrate. Severely inhibited by oxaloacetate plus glyoxylate. Catalyzes the oxidative decarboxylation of isocitrate to 2-oxoglutarate and carbon dioxide with the concomitant reduction of NADP(+). Cannot use NAD(+). This chain is Isocitrate dehydrogenase [NADP], found in Corynebacterium glutamicum (strain ATCC 13032 / DSM 20300 / JCM 1318 / BCRC 11384 / CCUG 27702 / LMG 3730 / NBRC 12168 / NCIMB 10025 / NRRL B-2784 / 534).